Here is a 381-residue protein sequence, read N- to C-terminus: NF-kappa-B inhibitor-like protein 1 (381 aa).

Positions 1–34 (MSNPSPQAPEEEASTSVCRPQSCSMASASRRHRR) are disordered. Over residues 14 to 27 (STSVCRPQSCSMAS) the composition is skewed to polar residues. ANK repeat units lie at residues 64-93 (AGQP…ADPA) and 97-134 (RHGD…IKNK). Disordered regions lie at residues 132-167 (KNKD…REWR) and 186-298 (EDDA…WRFG). S151 bears the Phosphoserine mark. The span at 151–160 (SAEEEEDEEV) shows a compositional bias: acidic residues. Basic and acidic residues-rich tracts occupy residues 205-218 (RLAR…RQQL) and 237-290 (RQHE…RGAE).

In terms of assembly, interacts with CACTIN (via N-terminal domain); the interaction occurs in a pro-inflammatory-independent manner. In terms of tissue distribution, high expression found in heart muscle, liver, kidney and skin. Not detected in spleen, lung and brain.

It is found in the nucleus. In terms of biological role, involved in the regulation of innate immune response. Acts as negative regulator of Toll-like receptor and interferon-regulatory factor (IRF) signaling pathways. Contributes to the negative regulation of transcriptional activation of NF-kappa-B target genes in response to endogenous pro-inflammatory stimuli. The polypeptide is NF-kappa-B inhibitor-like protein 1 (Nfkbil1) (Mus musculus (Mouse)).